Here is an 861-residue protein sequence, read N- to C-terminus: DNA primase (861 aa).

A CHC2-type zinc finger spans residues 805–843 (CLTRNHKGNRENVLVYLEFKVDNNRILIILWSKCFTTKC).

The protein belongs to the herpesviridae DNA primase family. Associates with the helicase and the primase-associated factor to form the helicase-primase factor.

The protein localises to the host nucleus. Essential component of the helicase/primase complex. Unwinds the DNA at the replication forks and generates single-stranded DNA for both leading and lagging strand synthesis. The primase initiates primer synthesis and thereby produces large amount of short RNA primers on the lagging strand that the polymerase elongates using dNTPs. The protein is DNA primase (U43) of Human herpesvirus 7 (strain JI) (HHV-7).